The sequence spans 529 residues: UDP-glucuronosyltransferase 2B1 (529 aa).

The first 23 residues, Met-1 to Cys-23, serve as a signal peptide directing secretion. Residues Asn-134 and Asn-316 are each glycosylated (N-linked (GlcNAc...) asparagine). The helical transmembrane segment at Val-494–Thr-510 threads the bilayer.

Belongs to the UDP-glycosyltransferase family.

It localises to the endoplasmic reticulum membrane. It carries out the reaction glucuronate acceptor + UDP-alpha-D-glucuronate = acceptor beta-D-glucuronoside + UDP + H(+). It catalyses the reaction 17beta-estradiol + UDP-alpha-D-glucuronate = 17beta-estradiol 17-O-(beta-D-glucuronate) + UDP + H(+). Its function is as follows. UDP-glucuronosyltransferase (UGT) that catalyzes phase II biotransformation reactions in which lipophilic substrates are conjugated with glucuronic acid to increase the metabolite's water solubility, thereby facilitating excretion into either the urine or bile. Essential for the elimination and detoxification of drugs, xenobiotics and endogenous compounds. Catalyzes the glucuronidation of the endogenous estrogen hormone estradiol. This chain is UDP-glucuronosyltransferase 2B1, found in Rattus norvegicus (Rat).